The following is a 38-amino-acid chain: Large ribosomal subunit protein bL36A (38 aa).

The protein belongs to the bacterial ribosomal protein bL36 family.

The chain is Large ribosomal subunit protein bL36A from Enterobacter sp. (strain 638).